A 424-amino-acid chain; its full sequence is Protein SamB (424 aa).

One can recognise a UmuC domain in the interval Phe-2 to Gly-189.

Belongs to the DNA polymerase type-Y family.

Functionally, involved in UV protection and mutation. The sequence is that of Protein SamB (samB) from Salmonella typhimurium.